The sequence spans 1336 residues: Aldehyde oxidase 4 (1336 aa).

The 2Fe-2S ferredoxin-type domain maps to 8–95 (DELIFFVNGK…GAAITTVEGV (88 aa)). Positions 47, 52, 55, and 77 each coordinate [2Fe-2S] cluster. Gln-116 contacts Mo-molybdopterin. 4 residues coordinate [2Fe-2S] cluster: Cys-117, Cys-120, Cys-152, and Cys-154. Position 154 (Cys-154) interacts with Mo-molybdopterin. In terms of domain architecture, FAD-binding PCMH-type spans 237-423 (FQGKRTTWII…LSIFIPYTAQ (187 aa)). FAD-binding positions include 265-272 (LVMGNTTV), Ala-346, Thr-355, His-359, Asp-368, and Ile-413. Mo-molybdopterin-binding positions include 804–805 (AF), Leu-1045, 1086–1089 (GSMG), Gln-1201, and Leu-1265. Glu-1267 serves as the catalytic Proton acceptor; for azaheterocycle hydroxylase activity.

It belongs to the xanthine dehydrogenase family. As to quaternary structure, homodimer. Requires [2Fe-2S] cluster as cofactor. FAD is required as a cofactor. The cofactor is Mo-molybdopterin. As to expression, highly expressed in Harderian glands and sebaceous glands with detectable levels in the epidermis and other keratinized epithelia (at protein level). Detected in testis. The expression is 3 times greater in females than in males.

The protein resides in the cytoplasm. It carries out the reaction an aldehyde + O2 + H2O = a carboxylate + H2O2 + H(+). The catalysed reaction is retinal + O2 + H2O = retinoate + H2O2 + H(+). The enzyme catalyses all-trans-retinal + O2 + H2O = all-trans-retinoate + H2O2 + H(+). In terms of biological role, aldehyde oxidase able to catalyze the oxidation of retinaldehyde into retinoate. Is responsible for the major all-trans-retinaldehyde-metabolizing activity in the Harderian gland, and contributes a significant amount of the same activity in the skin. Is devoid of pyridoxal-oxidizing activity, in contrast to the other aldehyde oxidases. Acts as a negative modulator of the epidermal trophism. May be able to oxidize a wide variety of aldehydes into their corresponding carboxylates and to hydroxylate azaheterocycles. This is Aldehyde oxidase 4 (Aox4) from Mus musculus (Mouse).